The following is a 197-amino-acid chain: Imidazoleglycerol-phosphate dehydratase (197 aa).

It belongs to the imidazoleglycerol-phosphate dehydratase family.

The protein localises to the cytoplasm. The catalysed reaction is D-erythro-1-(imidazol-4-yl)glycerol 3-phosphate = 3-(imidazol-4-yl)-2-oxopropyl phosphate + H2O. It participates in amino-acid biosynthesis; L-histidine biosynthesis; L-histidine from 5-phospho-alpha-D-ribose 1-diphosphate: step 6/9. This is Imidazoleglycerol-phosphate dehydratase from Syntrophomonas wolfei subsp. wolfei (strain DSM 2245B / Goettingen).